A 712-amino-acid polypeptide reads, in one-letter code: Elongation factor G (712 aa).

The tr-type G domain occupies 8 to 290 (TRYRNIGISA…AVIEFLPSPT (283 aa)). Residues 17 to 24 (AHIDAGKT), 88 to 92 (DTPGH), and 142 to 145 (NKMD) each bind GTP.

The protein belongs to the TRAFAC class translation factor GTPase superfamily. Classic translation factor GTPase family. EF-G/EF-2 subfamily.

Its subcellular location is the cytoplasm. Its function is as follows. Catalyzes the GTP-dependent ribosomal translocation step during translation elongation. During this step, the ribosome changes from the pre-translocational (PRE) to the post-translocational (POST) state as the newly formed A-site-bound peptidyl-tRNA and P-site-bound deacylated tRNA move to the P and E sites, respectively. Catalyzes the coordinated movement of the two tRNA molecules, the mRNA and conformational changes in the ribosome. This chain is Elongation factor G, found in Acinetobacter baumannii (strain AB307-0294).